Reading from the N-terminus, the 497-residue chain is 3-octaprenyl-4-hydroxybenzoate carboxy-lyase (497 aa).

A Mn(2+)-binding site is contributed by asparagine 172. Prenylated FMN is bound by residues 175–177 (IYR), 189–191 (RWL), and 194–195 (RG). Glutamate 238 contributes to the Mn(2+) binding site. Residue aspartate 287 is the Proton donor of the active site.

The protein belongs to the UbiD family. In terms of assembly, homohexamer. It depends on prenylated FMN as a cofactor. Mn(2+) is required as a cofactor.

It localises to the cell membrane. The enzyme catalyses a 4-hydroxy-3-(all-trans-polyprenyl)benzoate + H(+) = a 2-(all-trans-polyprenyl)phenol + CO2. It functions in the pathway cofactor biosynthesis; ubiquinone biosynthesis. Its function is as follows. Catalyzes the decarboxylation of 3-octaprenyl-4-hydroxy benzoate to 2-octaprenylphenol, an intermediate step in ubiquinone biosynthesis. The protein is 3-octaprenyl-4-hydroxybenzoate carboxy-lyase of Enterobacter sp. (strain 638).